Reading from the N-terminus, the 174-residue chain is MGTPGGGRRWMTLISITLLMVVGLGLYWDELSLSAGISPATSPRRAEGLLLGRLPLPMEPSILSPLEHLIEPPLQYKLMTIRHIPPVMPGTGMPHPYVGDCIQCHLMVGGPAAGSQFKTPYGAVLENLSRVRKLGPPILPTTRQPHPPAGRCIKCHDIVVKVPVEKKSGIKWLL.

Topologically, residues 1 to 9 are cytoplasmic; sequence MGTPGGGRR. A helical transmembrane segment spans residues 10 to 28; that stretch reads WMTLISITLLMVVGLGLYW. Residues 29-174 lie on the Lumenal side of the membrane; that stretch reads DELSLSAGIS…EKKSGIKWLL (146 aa). The MCR (magnetochrome) 1 signature appears at 87–107; sequence VMPGTGMPHPYVGDCIQCHLM. Residues Cys-101, Cys-104, His-105, Cys-152, Cys-155, and His-156 each contribute to the heme site. Positions 138–158 match the MCR 2 motif; that stretch reads ILPTTRQPHPPAGRCIKCHDI.

This sequence belongs to the magnetosome MamT family. Requires heme as cofactor.

It localises to the magnetosome membrane. In terms of biological role, may play a role in magnetite crystal maturation. May transfer electrons to balance the Fe(2+)-Fe(3+) ratio during magnetite formation. The sequence is that of Magnetosome protein MamT from Magnetospirillum gryphiswaldense (strain DSM 6361 / JCM 21280 / NBRC 15271 / MSR-1).